We begin with the raw amino-acid sequence, 203 residues long: ATP-dependent Clp protease proteolytic subunit 2 (203 aa).

Residue Ser98 is the Nucleophile of the active site. Residue His123 is part of the active site.

The protein belongs to the peptidase S14 family. In terms of assembly, fourteen ClpP subunits assemble into 2 heptameric rings which stack back to back to give a disk-like structure with a central cavity, resembling the structure of eukaryotic proteasomes.

Its subcellular location is the cytoplasm. The enzyme catalyses Hydrolysis of proteins to small peptides in the presence of ATP and magnesium. alpha-casein is the usual test substrate. In the absence of ATP, only oligopeptides shorter than five residues are hydrolyzed (such as succinyl-Leu-Tyr-|-NHMec, and Leu-Tyr-Leu-|-Tyr-Trp, in which cleavage of the -Tyr-|-Leu- and -Tyr-|-Trp bonds also occurs).. Its function is as follows. Cleaves peptides in various proteins in a process that requires ATP hydrolysis. Has a chymotrypsin-like activity. Plays a major role in the degradation of misfolded proteins. The chain is ATP-dependent Clp protease proteolytic subunit 2 from Chlamydia pneumoniae (Chlamydophila pneumoniae).